Consider the following 1372-residue polypeptide: Polysaccharide lyase 8 family protein HylA (1372 aa).

The first 25 residues, 1-25, serve as a signal peptide directing secretion; it reads MIKKIIVVVAFMLTGFSLTAMSASA. Positions 63-172 constitute an F5/8 type C domain; the sequence is DGDETTRWSA…SIISFEAYEK (110 aa). The BIG2 domain occupies 183–242; the sequence is TENLTISEKRKQQLAFEVSPAGVDITEDQIEWSSSDPTIVTVDQTGNLTAVKSGEAKVTV. Catalysis depends on residues histidine 487, tyrosine 496, and arginine 550. 4 FIVAR domains span residues 1014–1075, 1084–1146, 1155–1217, and 1226–1288; these read KEAL…VKQL, DKTN…VKQL, and DKTN…VKRL. Residues 1288 to 1336 are disordered; the sequence is LTLKNSGENKKEQKNGGNNGHLNTSTGVDQTGTKQVKPSSQGGFRKASQ. A compositionally biased stretch (polar residues) spans 1308–1329; sequence HLNTSTGVDQTGTKQVKPSSQG. The LPXTG sorting signal signature appears at 1338–1342; sequence LPSTG. Residue threonine 1341 is modified to Pentaglycyl murein peptidoglycan amidated threonine. A propeptide spans 1342–1372 (removed by sortase); sequence GEKKSIALVIIGLLVIASGCLLVFRKSKSKK.

This sequence belongs to the polysaccharide lyase 8 family.

The protein resides in the secreted. Its subcellular location is the cell wall. Has a very modest degradation activity against heparin sodium salt (HS) in vitro. Involved in the pathogenesis of vancomycin-resistant E.faecalis infections. This chain is Polysaccharide lyase 8 family protein HylA, found in Enterococcus faecalis (strain ATCC 700802 / V583).